The sequence spans 93 residues: Putative protein adenylyltransferase MJ0435 (93 aa).

A GSX(10)DXD motif motif is present at residues 26 to 40 (GSYARNEQKETSDID). Positions 38, 40, and 70 each coordinate Mg(2+).

The protein belongs to the MntA antitoxin family. As to quaternary structure, probably forms a complex with cognate toxin MJ0434. Requires Mg(2+) as cofactor.

The catalysed reaction is L-tyrosyl-[protein] + ATP = O-(5'-adenylyl)-L-tyrosyl-[protein] + diphosphate. It carries out the reaction O-(5'-adenylyl)-L-tyrosyl-[protein] + ATP = O-[5'-(adenylyl-(5'-&gt;3')-adenylyl)]-L-tyrosyl-[protein] + diphosphate. Probable antitoxin component of a putative type VII toxin-antitoxin (TA) system. Neutralizes cognate toxic MJ0434 by di-AMPylation. This is Putative protein adenylyltransferase MJ0435 from Methanocaldococcus jannaschii (strain ATCC 43067 / DSM 2661 / JAL-1 / JCM 10045 / NBRC 100440) (Methanococcus jannaschii).